Reading from the N-terminus, the 431-residue chain is 4-hydroxy-3-methylbut-2-en-1-yl diphosphate synthase (flavodoxin) (431 aa).

[4Fe-4S] cluster-binding residues include cysteine 310, cysteine 313, cysteine 356, and glutamate 363.

It belongs to the IspG family. [4Fe-4S] cluster serves as cofactor.

It carries out the reaction (2E)-4-hydroxy-3-methylbut-2-enyl diphosphate + oxidized [flavodoxin] + H2O + 2 H(+) = 2-C-methyl-D-erythritol 2,4-cyclic diphosphate + reduced [flavodoxin]. The protein operates within isoprenoid biosynthesis; isopentenyl diphosphate biosynthesis via DXP pathway; isopentenyl diphosphate from 1-deoxy-D-xylulose 5-phosphate: step 5/6. In terms of biological role, converts 2C-methyl-D-erythritol 2,4-cyclodiphosphate (ME-2,4cPP) into 1-hydroxy-2-methyl-2-(E)-butenyl 4-diphosphate. The sequence is that of 4-hydroxy-3-methylbut-2-en-1-yl diphosphate synthase (flavodoxin) from Rhodopseudomonas palustris (strain HaA2).